Reading from the N-terminus, the 192-residue chain is Thymidine kinase (192 aa).

ATP is bound by residues 9-16 (SAMNAGKS) and 87-90 (DECQ). Glu88 acts as the Proton acceptor in catalysis. The Zn(2+) site is built by Cys145, Cys147, Cys182, and His185.

It belongs to the thymidine kinase family. Homotetramer.

It is found in the cytoplasm. The catalysed reaction is thymidine + ATP = dTMP + ADP + H(+). This chain is Thymidine kinase, found in Vibrio vulnificus (strain YJ016).